The chain runs to 242 residues: Thymocyte nuclear protein 1 (242 aa).

The interval 1–64 is disordered; the sequence is MPWPSRKRDK…KKAKESDSGG (64 aa). Residues 6–10 carry the Nuclear localization signal motif; it reads RKRDK. The segment covering 10–27 has biased composition (basic and acidic residues); that stretch reads KGAVADKKEPDAKIAKTE. Residues 28–37 show a composition bias toward acidic residues; that stretch reads EETEDKEEEE.

Undergoes proteolytic processing during lymphocyte apoptosis. Post-translationally, phosphorylated. As to expression, expressed at high levels in bursa of fabricus, thymus and spleen. Also found in the liver, intestine, heart and brain.

Its subcellular location is the nucleus. In terms of biological role, specifically binds 5-hydroxymethylcytosine (5hmC), suggesting that it acts as a specific reader of 5hmC. This is Thymocyte nuclear protein 1 (THYN1) from Gallus gallus (Chicken).